A 161-amino-acid chain; its full sequence is Nucleotide-binding protein Bphy_0527 (161 aa).

This sequence belongs to the YajQ family.

Its function is as follows. Nucleotide-binding protein. In Paraburkholderia phymatum (strain DSM 17167 / CIP 108236 / LMG 21445 / STM815) (Burkholderia phymatum), this protein is Nucleotide-binding protein Bphy_0527.